The following is a 502-amino-acid chain: uncharacterized protein (502 aa).

The chain crosses the membrane as a helical span at residues 1 to 21; it reads MKIFLVFLSVFFFNGCFGLVY. PLD phosphodiesterase domains follow at residues 162-189 and 396-423; these read IKKR…GDNY and TKHS…DPRS.

The protein belongs to the phospholipase D family. Cardiolipin synthase subfamily.

Its subcellular location is the cell membrane. This is an uncharacterized protein from Helicobacter pylori (strain ATCC 700392 / 26695) (Campylobacter pylori).